Consider the following 487-residue polypeptide: MVPVIALVGRPNVGKSTMFNRLTKTRDAIVGDLSGLTRDRQYGDASWQGRSFILIDTGGITGDEVGMDEKMAEQSLMAIEEADYVLFLVDARAGMTAADQMIAEHLRKRNKAAILVANKIDNIDPDVARAEFSPMGMGNAIPVAGSQGRGISALMEAVLGHLPRDAEDEALEQDVAEGEEAVRIPGPSEKDGIKIAIIGRPNVGKSTLVNRMLGEERVVVYDEPGTTRDSIYIPFERDGDKYTFIDTAGVRKRGKIHEEVEKFSVVKTLQAIKDANVVIFVMDAREGVVDHDLNLLGFALEAGRAIVIALNKWDGMEPGERAYVKTELERRLFFVDFADIHFISALHGTGVGNLYKSVQAAFQSAVTRWPTSRLTQILEDAVSEHQPPMVNGRRIKLRYAHLGGANPPLIVIHGNQTDSIPKSYSRYLENTYRRVLKLVGTPIRIEYKGGENPYEGKKNTLTDRQVNKKRRLMSHHKKAEKKRRDKR.

2 EngA-type G domains span residues 3-166 and 193-366; these read PVIA…PRDA and IKIA…QSAV. GTP contacts are provided by residues 9–16, 56–60, 118–121, 199–206, 246–250, and 311–314; these read GRPNVGKS, DTGGI, NKID, DTAGV, and NKWD. The region spanning 367 to 451 is the KH-like domain; it reads TRWPTSRLTQ…PIRIEYKGGE (85 aa). Basic and acidic residues predominate over residues 448-461; sequence KGGENPYEGKKNTL. Residues 448–487 form a disordered region; it reads KGGENPYEGKKNTLTDRQVNKKRRLMSHHKKAEKKRRDKR. Over residues 467–487 the composition is skewed to basic residues; that stretch reads NKKRRLMSHHKKAEKKRRDKR.

Belongs to the TRAFAC class TrmE-Era-EngA-EngB-Septin-like GTPase superfamily. EngA (Der) GTPase family. In terms of assembly, associates with the 50S ribosomal subunit.

Functionally, GTPase that plays an essential role in the late steps of ribosome biogenesis. The polypeptide is GTPase Der (Pseudomonas putida (strain ATCC 700007 / DSM 6899 / JCM 31910 / BCRC 17059 / LMG 24140 / F1)).